Reading from the N-terminus, the 201-residue chain is ATP-dependent Clp protease proteolytic subunit (201 aa).

Ser97 functions as the Nucleophile in the catalytic mechanism. His122 is a catalytic residue.

It belongs to the peptidase S14 family. In terms of assembly, fourteen ClpP subunits assemble into 2 heptameric rings which stack back to back to give a disk-like structure with a central cavity, resembling the structure of eukaryotic proteasomes.

It is found in the cytoplasm. The catalysed reaction is Hydrolysis of proteins to small peptides in the presence of ATP and magnesium. alpha-casein is the usual test substrate. In the absence of ATP, only oligopeptides shorter than five residues are hydrolyzed (such as succinyl-Leu-Tyr-|-NHMec, and Leu-Tyr-Leu-|-Tyr-Trp, in which cleavage of the -Tyr-|-Leu- and -Tyr-|-Trp bonds also occurs).. In terms of biological role, cleaves peptides in various proteins in a process that requires ATP hydrolysis. Has a chymotrypsin-like activity. Plays a major role in the degradation of misfolded proteins. This is ATP-dependent Clp protease proteolytic subunit from Nitratidesulfovibrio vulgaris (strain DSM 19637 / Miyazaki F) (Desulfovibrio vulgaris).